The following is a 225-amino-acid chain: Two-component response regulator PhoP (225 aa).

In terms of domain architecture, Response regulatory spans 2–116; it reads KLLVVEDEAL…ELEARLNALL (115 aa). Aspartate 51 carries the post-translational modification 4-aspartylphosphate. Positions 124-222 form a DNA-binding region, ompR/PhoB-type; it reads QSTIEAGPLV…VRGQGYLFTE (99 aa).

In terms of biological role, member of the two-component regulatory system PhoP/PhoQ that plays a role in the regulation of resistance towards polymyxin B and cationic antimicrobial peptides in response to limiting concentrations of Mg(2+). Functions as a transcriptional activator by direct binding to a cis-acting sequence upstream of the target gene promoters including oprH and pmrH promoters. This Pseudomonas aeruginosa (strain ATCC 15692 / DSM 22644 / CIP 104116 / JCM 14847 / LMG 12228 / 1C / PRS 101 / PAO1) protein is Two-component response regulator PhoP (phoP).